The sequence spans 516 residues: TBC1 domain family member 22A (516 aa).

Residue alanine 2 is modified to N-acetylalanine. Disordered stretches follow at residues 63–88 and 102–186; these read EFESNTSDAWDAGEDDDELLAMATES and LRNH…ALAD. Residues 107-116 show a composition bias toward polar residues; it reads QRQSQPSQKT. Residues 122–133 are compositionally biased toward pro residues; sequence EPQPIAEPPVPP. Residues 143-179 show a composition bias toward polar residues; sequence VSESHTPCPSESTGDTVPLQRSQSLPHSATVTLSGTS. Residues serine 144 and serine 166 each carry the phosphoserine modification. One can recognise a Rab-GAP TBC domain in the interval 221–445; sequence GIPKPVRPMT…RLWDTYQSEP (225 aa).

Homodimer. Interacts with ACBD3 and ARFGEF1. Interacts with YWHAB, YWHAE, YWHAG, YWHAH, YWHAQ and YWHAZ.

Its function is as follows. May act as a GTPase-activating protein for Rab family protein(s). The protein is TBC1 domain family member 22A (Tbc1d22a) of Mus musculus (Mouse).